We begin with the raw amino-acid sequence, 221 residues long: Max dimerization protein 1 (221 aa).

Positions 21-49 (RREREAEHGYASMLPYNSKERDGLKRKSK) match the Nuclear localization signal motif. Disordered stretches follow at residues 29 to 67 (GYASMLPYNSKERDGLKRKSKSKKSSSSRSTHNEMEKNR) and 178 to 221 (SSSS…SIAL). Residues 55–107 (SSRSTHNEMEKNRRAHLRLCLEKLKMLVPLGPESNRHTTLSLLMRAKLHIKKL) form the bHLH domain. Over residues 193-221 (MQSICSDEGYSSSGLKSIGLQNNPKSIAL) the composition is skewed to polar residues.

As to quaternary structure, heterodimer with MAX; the interaction is required for DNA-binding. DNA binding requires dimerization with another bHLH protein; does not form homodimers, and does not bind to DNA in the absence of MAX in vitro. As to expression, expressed primarily in cells that have undergone terminal differentiation including notochord, floor plate and cement gland.

Its subcellular location is the nucleus. Component of a transcriptional repressor complex together with MAX. In complex with MAX binds to the core DNA sequence 5'-CAC[GA]TG-3'. Antagonizes MYC transcriptional activity by competing with MYC for MAX binding. Binds to the TERT promoter and represses telomerase expression, possibly by interfering with MYC binding. The protein is Max dimerization protein 1 (mxd1) of Xenopus laevis (African clawed frog).